Reading from the N-terminus, the 47-residue chain is uncharacterized protein (47 aa).

A signal peptide spans 1 to 25 (MAHKCASAKLLSGIMALLFNGKSLL).

This is an uncharacterized protein from Saccharomyces cerevisiae (strain ATCC 204508 / S288c) (Baker's yeast).